The primary structure comprises 4690 residues: Nonribosomal peptide synthetase sidN (4690 aa).

The interval 238–656 is adenylation 1; it reads ARVRENPGRI…LGRLSSDQIK (419 aa). The region spanning 779-856 is the Carrier 1 domain; that stretch reads SSSIPMLQSV…DLDTKAQQAL (78 aa). Ser816 is modified (O-(pantetheine 4'-phosphoryl)serine). The interval 924–1175 is condensation 1; the sequence is APGGKAFIQH…AFGNTMSDRF (252 aa). The segment at 1349–1760 is adenylation 2; sequence EFAQKSPNAI…GRKDDLVKIR (412 aa). The region spanning 1889–1965 is the Carrier 2 domain; sequence PAWCIKHRPL…DLINHLSVKR (77 aa). At Ser1926 the chain carries O-(pantetheine 4'-phosphoryl)serine. The tract at residues 2001 to 2285 is condensation 2; it reads PTTVFQDGML…SERLLESQLV (285 aa). An adenylation 3 region spans residues 2464–2869; sequence TWAKTHPEWK…GRKDEQVKVR (406 aa). The region spanning 3002–3079 is the Carrier 3 domain; the sequence is RDLTSIEKQI…ELGRMKNALK (78 aa). Ser3040 bears the O-(pantetheine 4'-phosphoryl)serine mark. A condensation 3 region spans residues 3121–3530; that stretch reads CMPLQEVLVA…QMESLVTSFT (410 aa). The Carrier 4 domain occupies 3564-3637; it reads SVLEQQIRDV…KLATHIQTTS (74 aa). Ser3598 is subject to O-(pantetheine 4'-phosphoryl)serine. Residues 3679 to 4087 form a condensation 4 region; the sequence is VYPLTPLQAG…FESIRKHPDE (409 aa). The Carrier 5 domain occupies 4119-4195; sequence SAIDQFLDPL…KLCEVAFAKS (77 aa). Ser4156 carries the post-translational modification O-(pantetheine 4'-phosphoryl)serine. The tract at residues 4262–4589 is condensation 5; it reads WVFKAENGLD…FNAHLNILWN (328 aa).

This sequence belongs to the NRP synthetase family.

It participates in siderophore biosynthesis. In terms of biological role, nonribosomal peptide synthetase required for the biosynthetis of epichloenin A, an extracellular siderophore that plays a crucial role in endophyte-grass symbioses. SidN assembles epichloenin A by activating and incorporating three trans-anhydromevalonylhydroxyornithine (trans-AMHO), 1 glutamine and 4 glycine moieties. Trans-AMHO is produced from L-ornithine via 2 steps involving a L-ornithine N(5)-monooxygenase and an AHMO-N(5)-transacylase that have still to be identified. The third adenylation domain (A3) of sidN incorporates the hydroxamate groups of the siderophore which forms an octahedral iron complex. The other component amino acids are assembled by sidN adenylation domains A1 and A2. The protein is Nonribosomal peptide synthetase sidN of Epichloe festucae (strain Fl1).